A 1331-amino-acid polypeptide reads, in one-letter code: Receptor-type adenylate cyclase B (1331 aa).

Topologically, residues 1–33 (MYADATHPRRACWCGAGGVSGCVRQRHAYRCSR) are cytoplasmic. Residues 34–54 (LLAGVLLIVGALTLTLAVSTV) traverse the membrane as a helical segment. The Extracellular segment spans residues 55–898 (PAAWAAGAVA…SHALTPAQRG (844 aa)). N-linked (GlcNAc...) asparagine glycosylation is found at Asn-255, Asn-429, Asn-558, Asn-574, and Asn-657. Residues 899–919 (GAIAGIALLTVILLAVAGLAL) form a helical membrane-spanning segment. The Cytoplasmic portion of the chain corresponds to 920–1331 (YCCMDNRNND…PTVCNVRGAH (412 aa)). Residues 940–1094 (TLLFTDIESS…DTSNMAARTE (155 aa)) enclose the Guanylate cyclase domain. Mg(2+) contacts are provided by Asp-945 and Asp-988.

Belongs to the adenylyl cyclase class-3 family. Requires Mg(2+) as cofactor.

It localises to the membrane. It carries out the reaction ATP = 3',5'-cyclic AMP + diphosphate. In terms of biological role, could act as a receptor for an unknown ligand. The chain is Receptor-type adenylate cyclase B (RAC-B) from Leishmania donovani.